A 908-amino-acid chain; its full sequence is Metabotropic glutamate receptor 8 (908 aa).

The N-terminal stretch at 1 to 33 is a signal peptide; the sequence is MVCEGKRSTSCPCFFLLTAKFYWILTMMQRTHS. At 34–583 the chain is on the extracellular side; sequence QEYAHSIRLD…IIKLEWHSPW (550 aa). A disulfide bridge links cysteine 64 with cysteine 106. A glycan (N-linked (GlcNAc...) asparagine) is linked at asparagine 95. Residues serine 156, 177–179, and tyrosine 227 each bind L-glutamate; that span reads AST. Cystine bridges form between cysteine 246-cysteine 534, cysteine 369-cysteine 384, cysteine 424-cysteine 431, cysteine 516-cysteine 535, cysteine 520-cysteine 538, cysteine 541-cysteine 553, and cysteine 556-cysteine 569. A glycan (N-linked (GlcNAc...) asparagine) is linked at asparagine 298. An L-glutamate-binding site is contributed by aspartate 309. Lysine 401 serves as a coordination point for L-glutamate. N-linked (GlcNAc...) asparagine glycans are attached at residues asparagine 452 and asparagine 480. N-linked (GlcNAc...) asparagine glycosylation is present at asparagine 565. The helical transmembrane segment at 584-608 threads the bilayer; that stretch reads AVVPVFIAILGIIATTFVIVTFVRY. The Cytoplasmic portion of the chain corresponds to 609–620; it reads NDTPIVRASGRE. The helical transmembrane segment at 621 to 641 threads the bilayer; that stretch reads LSYVLLTGIFLCYSITFLMIA. Topologically, residues 642–647 are extracellular; sequence APDTII. The helical transmembrane segment at 648-668 threads the bilayer; it reads CSFRRIFLGLGMCFSYAALLT. At 669–695 the chain is on the cytoplasmic side; it reads KTNRIHRIFEQGKKSVTAPKFISPASQ. The chain crosses the membrane as a helical span at residues 696 to 716; sequence LVITFSLISVQLLGVFVWFVV. The Extracellular portion of the chain corresponds to 717–746; it reads DPPHTIIDYGEQRTLDPENARGVLKCDISD. A helical transmembrane segment spans residues 747-768; the sequence is LSLICSLGYSILLMVTCTVYAI. Topologically, residues 769–781 are cytoplasmic; that stretch reads KTRGVPETFNEAK. The chain crosses the membrane as a helical span at residues 782–803; it reads PIGFTMYTTCIIWLAFIPIFFG. Topologically, residues 804–818 are extracellular; sequence TAQSAEKMYIQTTTL. Residues 819–843 traverse the membrane as a helical segment; the sequence is TVSMSLSASVSLGMLYMPKVYIIIF. Topologically, residues 844–908 are cytoplasmic; sequence HPEQNVQKRK…TYISYSNHSI (65 aa). Lysine 882 participates in a covalent cross-link: Glycyl lysine isopeptide (Lys-Gly) (interchain with G-Cter in SUMO1).

Belongs to the G-protein coupled receptor 3 family. As to quaternary structure, interacts with PICK1. As to expression, strongly expressed in olfactory bulb, accessory olfactory bulb, and mammillary body. Weaker expression in the retina, and in scattered cells in the cortex and hindbrain.

It is found in the cell membrane. Its function is as follows. G-protein coupled receptor for glutamate. Ligand binding causes a conformation change that triggers signaling via guanine nucleotide-binding proteins (G proteins) and modulates the activity of down-stream effectors. Signaling inhibits adenylate cyclase activity. The protein is Metabotropic glutamate receptor 8 (Grm8) of Mus musculus (Mouse).